Reading from the N-terminus, the 344-residue chain is KRR1 small subunit processome component homolog (344 aa).

Residues 125-193 enclose the KH domain; the sequence is DIIKIGNLVH…VRDIVLETMN (69 aa). Over residues 232–245 the composition is skewed to basic residues; the sequence is NISKRKQPKVKKQK. Disordered regions lie at residues 232–260 and 273–326; these read NISK…ESKV and QEQK…TKVD. A coiled-coil region spans residues 270–295; it reads FLNQEQKQAKRNQGRTEKQKEAAKRQ. Composition is skewed to basic and acidic residues over residues 283–302 and 315–326; these read GRTE…RNKD and RKKEDGSSTKVD.

The protein belongs to the KRR1 family. Monomer. Component of the ribosomal small subunit (SSU) processome.

Its subcellular location is the nucleus. It is found in the nucleolus. Functionally, required for 40S ribosome biogenesis. Involved in nucleolar processing of pre-18S ribosomal RNA and ribosome assembly. Binds to RNA. Required for female germline development, cell viability during eye development and for survival of dividing cells and epithelial cells during early wing disk development. The chain is KRR1 small subunit processome component homolog from Drosophila yakuba (Fruit fly).